The following is a 108-amino-acid chain: Glutaredoxin-1 (108 aa).

Residues 3–106 (EEFVQQRLAN…DILLSIGVLR (104 aa)) enclose the Glutaredoxin domain. Cysteines 23 and 26 form a disulfide.

It belongs to the glutaredoxin family.

Its subcellular location is the virion. Its function is as follows. Displays thioltransferase and dehydroascorbate reductase activities. The sequence is that of Glutaredoxin-1 (OPG075) from Cynomys gunnisoni (Gunnison's prairie dog).